Consider the following 37-residue polypeptide: Large ribosomal subunit protein bL36 (37 aa).

The protein belongs to the bacterial ribosomal protein bL36 family.

The protein is Large ribosomal subunit protein bL36 of Moorella thermoacetica (strain ATCC 39073 / JCM 9320).